Reading from the N-terminus, the 402-residue chain is S-adenosylmethionine synthase (402 aa).

Residue histidine 17 participates in ATP binding. Aspartate 19 serves as a coordination point for Mg(2+). Position 45 (glutamate 45) interacts with K(+). L-methionine-binding residues include glutamate 58 and glutamine 101. Residues glutamine 101–glutamate 111 are flexible loop. ATP-binding positions include aspartate 177 to lysine 179, arginine 244 to phenylalanine 245, aspartate 253, arginine 259 to lysine 260, alanine 276, and lysine 280. Aspartate 253 is a binding site for L-methionine. Lysine 284 contacts L-methionine.

The protein belongs to the AdoMet synthase family. Homotetramer; dimer of dimers. It depends on Mg(2+) as a cofactor. Requires K(+) as cofactor.

The protein localises to the cytoplasm. It carries out the reaction L-methionine + ATP + H2O = S-adenosyl-L-methionine + phosphate + diphosphate. It participates in amino-acid biosynthesis; S-adenosyl-L-methionine biosynthesis; S-adenosyl-L-methionine from L-methionine: step 1/1. Catalyzes the formation of S-adenosylmethionine (AdoMet) from methionine and ATP. The overall synthetic reaction is composed of two sequential steps, AdoMet formation and the subsequent tripolyphosphate hydrolysis which occurs prior to release of AdoMet from the enzyme. This chain is S-adenosylmethionine synthase, found in Lactobacillus johnsonii (strain CNCM I-12250 / La1 / NCC 533).